We begin with the raw amino-acid sequence, 117 residues long: Immunoglobulin heavy variable 1-69 (117 aa).

The first 19 residues, 1-19 (MDWTWRFLFVVAAATGVQS), serve as a signal peptide directing secretion. Pyrrolidone carboxylic acid is present on glutamine 20. Positions 20–44 (QVQLVQSGAEVKKPGSSVKVSCKAS) are framework-1. In terms of domain architecture, Ig-like spans 20–117 (QVQLVQSGAE…EDTAVYYCAR (98 aa)). An intrachain disulfide couples cysteine 41 to cysteine 115. The segment at 45–52 (GGTFSSYA) is complementarity-determining-1. Residues 53–69 (ISWVRQAPGQGLEWMGG) are framework-2. Residues 70–77 (IIPIFGTA) are complementarity-determining-2. Residues 78–115 (NYAQKFQGRVTITADKSTSTAYMELSSLRSEDTAVYYC) form a framework-3 region. The complementarity-determining-3 stretch occupies residues 116–117 (AR).

In terms of assembly, immunoglobulins are composed of two identical heavy chains and two identical light chains; disulfide-linked.

The protein resides in the secreted. Its subcellular location is the cell membrane. V region of the variable domain of immunoglobulin heavy chains that participates in the antigen recognition. Immunoglobulins, also known as antibodies, are membrane-bound or secreted glycoproteins produced by B lymphocytes. In the recognition phase of humoral immunity, the membrane-bound immunoglobulins serve as receptors which, upon binding of a specific antigen, trigger the clonal expansion and differentiation of B lymphocytes into immunoglobulins-secreting plasma cells. Secreted immunoglobulins mediate the effector phase of humoral immunity, which results in the elimination of bound antigens. The antigen binding site is formed by the variable domain of one heavy chain, together with that of its associated light chain. Thus, each immunoglobulin has two antigen binding sites with remarkable affinity for a particular antigen. The variable domains are assembled by a process called V-(D)-J rearrangement and can then be subjected to somatic hypermutations which, after exposure to antigen and selection, allow affinity maturation for a particular antigen. In Homo sapiens (Human), this protein is Immunoglobulin heavy variable 1-69.